A 503-amino-acid polypeptide reads, in one-letter code: Na(+)-translocating NADH-quinone reductase subunit B (503 aa).

The next 3 membrane-spanning stretches (helical) occupy residues 55-75, 120-142, and 160-180; these read MMLVVIALMPTIFAAVWNSGL, IFLPLLFISYAVGGTCEVLFAII, and LILPPTIPYWMAALGIAFGVV. Threonine 248 is modified (FMN phosphoryl threonine). Helical transmembrane passes span 361–381, 384–404, 417–437, 452–472, and 475–495; these read TSTVACLLGAGLLLLTGIASW, MLSFGLSAFFFAWFFKIMSIL, FFIPAYRHLCIGGLAFGLVFM, WLYGAFIGFLTILIRLINPAY, and GVMLAILLGNVFAPLFDNIAL.

The protein belongs to the NqrB/RnfD family. Composed of six subunits; NqrA, NqrB, NqrC, NqrD, NqrE and NqrF. FMN serves as cofactor.

Its subcellular location is the cell inner membrane. The enzyme catalyses a ubiquinone + n Na(+)(in) + NADH + H(+) = a ubiquinol + n Na(+)(out) + NAD(+). NQR complex catalyzes the reduction of ubiquinone-1 to ubiquinol by two successive reactions, coupled with the transport of Na(+) ions from the cytoplasm to the periplasm. NqrA to NqrE are probably involved in the second step, the conversion of ubisemiquinone to ubiquinol. The sequence is that of Na(+)-translocating NADH-quinone reductase subunit B from Chlamydia trachomatis serovar A (strain ATCC VR-571B / DSM 19440 / HAR-13).